Reading from the N-terminus, the 563-residue chain is MAPLLAAAMNHAAHPVLRSHLGPNNESFSRHHLSSSPQSSKRRFNLSFTPRSARVGNQNGVQLLSPSEIPRRDWFPSDFIFGAATSAYQIEGAWNEDGKGESNWDHFCHNFPERIMDGSNADIGANSYHMYKTDVRLLKEMGMDAYRFSISWPRILPKGTVEGGINQDGIDYYKRLINLLLENGIEPYVTIFHWDVPQALEEKYGGFLDKTQKRIVNDYKNFAKVCFDNFGDKVKNWLTFNEPQTFTSFSYGTGVFAPGRCSPGLDCAIPTGNSLVEPYIAGHNILLAHAEAVDLYNKYYKGENGRIGLAFDVMGRVPYGTSFLDEQAKERSMDINLGWFLEPVVRGDYPFSMRSLARERLPFFSDKQQEKLVGSYNMLGINYYTSIFSKHIDISPKYSPVLNTDDAYASQETYGPDGKPIGPPMGNPWIYLYPEGLKDILMIMKNKYGNPPIYITENGIGDVDTKEKPLPMEAALNDYKRLDYIQRHISTLKESIDLGANVHGYFAWSLLDNFEWYAGYTERYGIVYVDRKNNYTRYMKESAKWLKEFNTAKKPSKKIITPA.

The transit peptide at 1–51 (MAPLLAAAMNHAAHPVLRSHLGPNNESFSRHHLSSSPQSSKRRFNLSFTPR) directs the protein to the chloroplast. The segment at 17–43 (LRSHLGPNNESFSRHHLSSSPQSSKRR) is disordered. A beta-D-glucoside-binding positions include Gln89, His193, and 241–242 (NE). Residue Glu242 is the Proton donor of the active site. Cys261 and Cys267 are joined by a disulfide. Positions 322–358 (SFLDEQAKERSMDINLGWFLEPVVRGDYPFSMRSLAR) are dimerization. Tyr384 lines the a beta-D-glucoside pocket. Dimerization regions lie at residues 391-402 (HIDISPKYSPVL) and 447-450 (KYGN). Residues Glu457, Trp508, 515-516 (EW), and Tyr524 contribute to the a beta-D-glucoside site. Glu457 (nucleophile) is an active-site residue.

This sequence belongs to the glycosyl hydrolase 1 family. In terms of assembly, homo- and heterodimer. As to expression, expressed in leaves only starting at day 6 after germination.

It is found in the plastid. It localises to the chloroplast. The enzyme catalyses Hydrolysis of terminal, non-reducing beta-D-glucosyl residues with release of beta-D-glucose.. It catalyses the reaction DIMBOA beta-D-glucoside + H2O = DIMBOA + D-glucose. It carries out the reaction DIBOA beta-D-glucoside + H2O = DIBOA + D-glucose. Functionally, beta-glucosidase acting poorly on artificial aryl beta-glucosides. Has no activity toward the chromogenic substrate 6-bromo-2-naphthyl-beta-D-glucoside (6BNGlc). This is 4-hydroxy-7-methoxy-3-oxo-3,4-dihydro-2H-1,4-benzoxazin-2-yl glucoside beta-D-glucosidase 2, chloroplastic (GLU2) from Zea mays (Maize).